Reading from the N-terminus, the 187-residue chain is MATTNDIKNGTVLKLEGQLWNIIEFQHVKPGKGGAFVRTKMRNVMSGKVVDKTFNAGLKIETATVDRRDYQYLYQDGADFVFMDTSDYDQITVSGATVGDATNFMLENQMVNIAIHEGNPLYIELPPSVVLEITYTEPGLQGDRSSAGTKPATLETGYEIQVPLFVENNTKVKVDTRDGSYLGRVTE.

The protein belongs to the elongation factor P family.

It localises to the cytoplasm. It functions in the pathway protein biosynthesis; polypeptide chain elongation. In terms of biological role, involved in peptide bond synthesis. Stimulates efficient translation and peptide-bond synthesis on native or reconstituted 70S ribosomes in vitro. Probably functions indirectly by altering the affinity of the ribosome for aminoacyl-tRNA, thus increasing their reactivity as acceptors for peptidyl transferase. The sequence is that of Elongation factor P from Pseudarthrobacter chlorophenolicus (strain ATCC 700700 / DSM 12829 / CIP 107037 / JCM 12360 / KCTC 9906 / NCIMB 13794 / A6) (Arthrobacter chlorophenolicus).